The sequence spans 281 residues: Pantothenate synthetase (281 aa).

An ATP-binding site is contributed by Met30–His37. Catalysis depends on His37, which acts as the Proton donor. Residue Gln61 coordinates (R)-pantoate. Beta-alanine is bound at residue Gln61. Residue Gly147–Asp150 coordinates ATP. Gln153 contacts (R)-pantoate. Residues Ile176 and Lys184 to Arg187 each bind ATP.

Belongs to the pantothenate synthetase family. As to quaternary structure, homodimer.

It is found in the cytoplasm. It catalyses the reaction (R)-pantoate + beta-alanine + ATP = (R)-pantothenate + AMP + diphosphate + H(+). It functions in the pathway cofactor biosynthesis; (R)-pantothenate biosynthesis; (R)-pantothenate from (R)-pantoate and beta-alanine: step 1/1. Catalyzes the condensation of pantoate with beta-alanine in an ATP-dependent reaction via a pantoyl-adenylate intermediate. The sequence is that of Pantothenate synthetase from Clostridium botulinum (strain Okra / Type B1).